A 106-amino-acid chain; its full sequence is uncharacterized protein (106 aa).

Belongs to the HesB/IscA family.

This is an uncharacterized protein from Sinorhizobium fredii (strain NBRC 101917 / NGR234).